A 597-amino-acid chain; its full sequence is Golgin subfamily A member 8C (597 aa).

2 disordered regions span residues 1–80 and 96–120; these read MAEE…VPDS and KQQKKQVEHQLEEEKKANNEKQKAE. Over residues 38–50 the composition is skewed to polar residues; sequence TNGSIHETATSGG. The span at 53–70 shows a compositional bias: low complexity; that stretch reads SPGDSSSTSSSLHAPQSP. 3 coiled-coil regions span residues 81–141, 199–255, and 296–394; these read RSVK…NTDL, EWKL…SQEV, and SEVE…GKRL. A compositionally biased stretch (basic and acidic residues) spans 100–120; that stretch reads KQVEHQLEEEKKANNEKQKAE. 3 disordered regions span residues 390 to 422, 457 to 498, and 549 to 576; these read LGKRLAHPVASAQKEPEAAVPAPGPGGESSGFM, PITK…GVAA, and PVQGETREGSPHDKPTAQPIVQDHQEHP. The span at 470–483 shows a compositional bias: gly residues; it reads PGGGHHQAGPGQGG. Positions 553 to 563 are enriched in basic and acidic residues; the sequence is ETREGSPHDKP.

The protein belongs to the GOLGA8 family.

The chain is Golgin subfamily A member 8C (GOLGA8CP) from Homo sapiens (Human).